The sequence spans 118 residues: NADH-quinone oxidoreductase subunit A 2 (118 aa).

The next 3 membrane-spanning stretches (helical) occupy residues Tyr-5–Phe-25, Ile-62–Val-82, and Leu-87–Ile-107.

Belongs to the complex I subunit 3 family. NDH-1 is composed of 14 different subunits. Subunits NuoA, H, J, K, L, M, N constitute the membrane sector of the complex.

The protein localises to the cell inner membrane. The catalysed reaction is a quinone + NADH + 5 H(+)(in) = a quinol + NAD(+) + 4 H(+)(out). Its function is as follows. NDH-1 shuttles electrons from NADH, via FMN and iron-sulfur (Fe-S) centers, to quinones in the respiratory chain. The immediate electron acceptor for the enzyme in this species is believed to be ubiquinone. Couples the redox reaction to proton translocation (for every two electrons transferred, four hydrogen ions are translocated across the cytoplasmic membrane), and thus conserves the redox energy in a proton gradient. The protein is NADH-quinone oxidoreductase subunit A 2 of Geotalea uraniireducens (strain Rf4) (Geobacter uraniireducens).